We begin with the raw amino-acid sequence, 530 residues long: Ubiquitin carboxyl-terminal hydrolase 17-like protein 11 (530 aa).

The 296-residue stretch at 80 to 375 (AGLQNMGNTC…QAYVLFYIQK (296 aa)) folds into the USP domain. Cysteine 89 functions as the Nucleophile in the catalytic mechanism. Histidine 334 (proton acceptor) is an active-site residue. Basic and acidic residues-rich tracts occupy residues 382 to 392 (SESVSRGREPR) and 398 to 413 (DTDRRATQGELKRDHP). Disordered stretches follow at residues 382-413 (SESVSRGREPRALGAEDTDRRATQGELKRDHP) and 509-530 (RGRARRSKGKNKHSKRALLVCQ). The span at 510-524 (GRARRSKGKNKHSKR) shows a compositional bias: basic residues.

Belongs to the peptidase C19 family. USP17 subfamily.

It is found in the nucleus. The protein localises to the endoplasmic reticulum. The catalysed reaction is Thiol-dependent hydrolysis of ester, thioester, amide, peptide and isopeptide bonds formed by the C-terminal Gly of ubiquitin (a 76-residue protein attached to proteins as an intracellular targeting signal).. Deubiquitinating enzyme that removes conjugated ubiquitin from specific proteins to regulate different cellular processes that may include cell proliferation, progression through the cell cycle, apoptosis, cell migration, and the cellular response to viral infection. In Homo sapiens (Human), this protein is Ubiquitin carboxyl-terminal hydrolase 17-like protein 11 (USP17L11).